The sequence spans 378 residues: Erythronate-4-phosphate dehydrogenase (378 aa).

Ser-45 and Thr-66 together coordinate substrate. Residues Asp-146 and Thr-175 each contribute to the NAD(+) site. Arg-208 is an active-site residue. An NAD(+)-binding site is contributed by Asp-232. Glu-237 is a catalytic residue. His-254 functions as the Proton donor in the catalytic mechanism. Residue Gly-257 coordinates NAD(+). Position 258 (Tyr-258) interacts with substrate.

The protein belongs to the D-isomer specific 2-hydroxyacid dehydrogenase family. PdxB subfamily. Homodimer.

The protein localises to the cytoplasm. The enzyme catalyses 4-phospho-D-erythronate + NAD(+) = (R)-3-hydroxy-2-oxo-4-phosphooxybutanoate + NADH + H(+). Its pathway is cofactor biosynthesis; pyridoxine 5'-phosphate biosynthesis; pyridoxine 5'-phosphate from D-erythrose 4-phosphate: step 2/5. In terms of biological role, catalyzes the oxidation of erythronate-4-phosphate to 3-hydroxy-2-oxo-4-phosphonooxybutanoate. The polypeptide is Erythronate-4-phosphate dehydrogenase (Escherichia fergusonii (strain ATCC 35469 / DSM 13698 / CCUG 18766 / IAM 14443 / JCM 21226 / LMG 7866 / NBRC 102419 / NCTC 12128 / CDC 0568-73)).